We begin with the raw amino-acid sequence, 78 residues long: Antimicrobial peptide marcin-18 (78 aa).

Residues 1 to 23 (MQFKKQLMVIFLAYFLVVNESEA) form the signal peptide. An Arginine amide modification is found at R41. A propeptide spanning residues 42 to 78 (RKNQRSRSIMKRDLENLFDPYQRNLELDRLLKQLPNY) is cleaved from the precursor.

The protein belongs to the non-disulfide-bridged peptide (NDBP) superfamily. Medium-length antimicrobial peptide (group 3) family. Expressed by the venom gland.

The protein localises to the secreted. It is found in the target cell membrane. In terms of biological role, antimicrobial peptide with potent activity against bacteria. Acts by fastly disrupting the bacterial membrane. Shows activity against Gram-positive bacteria S.aureus (MIC=1.5-2.9 uM) and S.epidermidis (MIC=2.9 uM), M.luteus (MIC=23.4 uM), B.thuringiensis (MIC=2.9 uM), B.subtilis (MIC=2.9 uM) and Gram-negative bacteria E.coli (MIC=5.9-11.7 uM) and P.aeruginosa (MIC=5.9 uM), as well as against penicillin (MIC=2.9 uM) and methicillin (MIC=1.5-2.9 uM) resistant bacteria. Antibiotic activity is not affected by major negatively charged components of the prokaryotic cell wall (e.g. lipopolysaccharides and lipoteichoic acid). In vivo, in a mouse model of lethal peritonitis, shows potent antibiotic activity without cytotoxicity, improving the survival rate. This Olivierus martensii (Manchurian scorpion) protein is Antimicrobial peptide marcin-18.